A 112-amino-acid polypeptide reads, in one-letter code: DNA-binding protein Memar_1972 (112 aa).

The interval methionine 14–glutamine 35 is disordered.

The protein belongs to the PDCD5 family.

This chain is DNA-binding protein Memar_1972, found in Methanoculleus marisnigri (strain ATCC 35101 / DSM 1498 / JR1).